We begin with the raw amino-acid sequence, 78 residues long: UPF0349 protein Sca_0544 (78 aa).

Belongs to the UPF0349 family.

The sequence is that of UPF0349 protein Sca_0544 from Staphylococcus carnosus (strain TM300).